The sequence spans 167 residues: Aphrodisin (167 aa).

An N-terminal signal peptide occupies residues Met1–Ala16. Position 17 is a pyrrolidone carboxylic acid (Gln17). Intrachain disulfides connect Cys54-Cys58 and Cys73-Cys165. Residues Asn57 and Asn85 are each glycosylated (N-linked (GlcNAc...) asparagine).

It belongs to the calycin superfamily. Lipocalin family. As to expression, expressed in the vagina, uterus, and Bartholin's glands of female hamsters. Secreted in vaginal discharge.

It is found in the secreted. Functionally, acts as an aphrodisiac pheromone, reliably eliciting copulatory behavior from male hamster. In Cricetus cricetus (Black-bellied hamster), this protein is Aphrodisin.